Consider the following 157-residue polypeptide: Aspartate carbamoyltransferase regulatory chain (157 aa).

4 residues coordinate Zn(2+): Cys108, Cys113, Cys138, and Cys141.

Belongs to the PyrI family. In terms of assembly, contains catalytic and regulatory chains. Zn(2+) is required as a cofactor.

In terms of biological role, involved in allosteric regulation of aspartate carbamoyltransferase. This is Aspartate carbamoyltransferase regulatory chain from Korarchaeum cryptofilum (strain OPF8).